A 370-amino-acid polypeptide reads, in one-letter code: L-lactate oxidase (370 aa).

In terms of domain architecture, FMN hydroxy acid dehydrogenase spans 8–367 (DPDGMPVTLS…TPDLLTGFSG (360 aa)). Residue Y34 coordinates pyruvate. FMN is bound by residues 87–89 (PMA), S116, and Q136. Y138 contributes to the pyruvate binding site. T164 provides a ligand contact to FMN. R173 is a binding site for pyruvate. The FMN site is built by K238 and S260. The pyruvate site is built by H262 and R265. The active-site Proton acceptor is H262. FMN contacts are provided by residues 293–297 (DGGIR) and R317.

The protein belongs to the FMN-dependent alpha-hydroxy acid dehydrogenase family. As to quaternary structure, homotetramer. FMN is required as a cofactor.

The enzyme catalyses (S)-lactate + O2 = pyruvate + H2O2. The catalysed reaction is a (2S)-2-hydroxycarboxylate + O2 = a 2-oxocarboxylate + H2O2. It catalyses the reaction glycolate + O2 = glyoxylate + H2O2. It carries out the reaction 2-hydroxyoctadecanoate + O2 = 2-oxooctadecanoate + H2O2. Catalyzes the oxidation of (S)-lactate (L-lactate) to pyruvate, with a reduction of O2 to H2O2. Is also able to use glycolate and to a lesser extent 2-hydroxyoctadecanoate as substrate. The sequence is that of L-lactate oxidase from Roseobacter sp. (strain GAI101).